Consider the following 435-residue polypeptide: UDP-glucuronic acid decarboxylase 1 (435 aa).

The disordered stretch occupies residues 1-33; it reads MKQLHKQMSSKRDEETIPMSQSSPYSPKTLKHP. The Cytoplasmic segment spans residues 1–48; sequence MKQLHKQMSSKRDEETIPMSQSSPYSPKTLKHPRSLPRSLHYLFREQR. Residues 49–69 form a helical; Signal-anchor for type II membrane protein membrane-spanning segment; sequence LLFILVGILIGSTFFILQPSL. The Lumenal segment spans residues 70–435; that stretch reads SRLGAAESTS…ILNEDEGKGL (366 aa). A compositionally biased stretch (polar residues) spans 91 to 100; the sequence is DSPPSRSTFN. The tract at residues 91–110 is disordered; that stretch reads DSPPSRSTFNSGGGGGRTGR. NAD(+) contacts are provided by Gly-129, Phe-130, Val-131, Asp-150, Asn-151, Phe-153, Thr-154, Gly-155, Asp-175, and Val-176. Ile-180 provides a ligand contact to UDP-alpha-D-glucuronate. Leu-190 lines the NAD(+) pocket. A UDP-alpha-D-glucuronate-binding site is contributed by Lys-208. An NAD(+)-binding site is contributed by Thr-209. UDP-alpha-D-glucuronate-binding residues include Asn-216, Gly-219, Lys-222, and Arg-223. Residues Tyr-262 and Lys-266 each coordinate NAD(+). Tyr-262 (proton acceptor) is an active-site residue. Tyr-276 provides a ligand contact to UDP-alpha-D-glucuronate. NAD(+) contacts are provided by Thr-292 and Arg-303. The disordered stretch occupies residues 380–401; sequence EFKPNTADDPHKRKPDISKAKE. Residues 385–401 show a composition bias toward basic and acidic residues; sequence TADDPHKRKPDISKAKE.

The protein belongs to the NAD(P)-dependent epimerase/dehydratase family. UDP-glucuronic acid decarboxylase subfamily. NAD(+) is required as a cofactor. Ubiquitous.

Its subcellular location is the golgi apparatus. It localises to the golgi stack membrane. It carries out the reaction UDP-alpha-D-glucuronate + H(+) = UDP-alpha-D-xylose + CO2. It participates in nucleotide-sugar biosynthesis; UDP-alpha-D-xylose biosynthesis; UDP-alpha-D-xylose from UDP-alpha-D-glucuronate: step 1/1. Its function is as follows. Catalyzes the NAD-dependent decarboxylation of UDP-glucuronic acid to UDP-xylose. Necessary for the biosynthesis of the core tetrasaccharide in glycosaminoglycan biosynthesis. The chain is UDP-glucuronic acid decarboxylase 1 from Arabidopsis thaliana (Mouse-ear cress).